Here is a 194-residue protein sequence, read N- to C-terminus: Phosphoheptose isomerase (194 aa).

An SIS domain is found at 37–194 (IANSFKQGGK…LIEFEMAKTA (158 aa)). Residue 52-54 (NGG) participates in substrate binding. Zn(2+)-binding residues include His-61 and Glu-65. Substrate-binding positions include Glu-65, 93-94 (ND), 119-121 (STS), Ser-124, and Gln-172. Zn(2+)-binding residues include Gln-172 and His-180.

This sequence belongs to the SIS family. GmhA subfamily. As to quaternary structure, homotetramer. The cofactor is Zn(2+).

Its subcellular location is the cytoplasm. The catalysed reaction is 2 D-sedoheptulose 7-phosphate = D-glycero-alpha-D-manno-heptose 7-phosphate + D-glycero-beta-D-manno-heptose 7-phosphate. Its pathway is carbohydrate biosynthesis; D-glycero-D-manno-heptose 7-phosphate biosynthesis; D-glycero-alpha-D-manno-heptose 7-phosphate and D-glycero-beta-D-manno-heptose 7-phosphate from sedoheptulose 7-phosphate: step 1/1. The protein operates within bacterial outer membrane biogenesis; LOS core biosynthesis. Its function is as follows. Catalyzes the isomerization of sedoheptulose 7-phosphate in D-glycero-D-manno-heptose 7-phosphate. The polypeptide is Phosphoheptose isomerase (Haemophilus ducreyi (strain 35000HP / ATCC 700724)).